The chain runs to 872 residues: Leucine--tRNA ligase (872 aa).

The 'HIGH' region motif lies at 42 to 52 (PYPSGSLHMGH). Residues 634–638 (TMSKS) carry the 'KMSKS' region motif. Lys637 contacts ATP.

The protein belongs to the class-I aminoacyl-tRNA synthetase family.

It is found in the cytoplasm. It carries out the reaction tRNA(Leu) + L-leucine + ATP = L-leucyl-tRNA(Leu) + AMP + diphosphate. This is Leucine--tRNA ligase from Nostoc sp. (strain PCC 7120 / SAG 25.82 / UTEX 2576).